The primary structure comprises 273 residues: Protein ALUMINUM SENSITIVE 3 (273 aa).

A run of 7 helical transmembrane segments spans residues W14 to L34, I51 to I71, N76 to G96, Y107 to L127, Y136 to M156, A191 to G213, and A228 to I248.

It belongs to the UPF0014 family. As to expression, expressed in roots, leaves, stems, and flowers.

It is found in the cell membrane. Functionally, required for aluminum (Al) resistance/tolerance, probably by translocating Al from sensitive tissues such as growing roots to tissues less sensisitive to the toxic effects of Al. The protein is Protein ALUMINUM SENSITIVE 3 (ALS3) of Arabidopsis thaliana (Mouse-ear cress).